A 438-amino-acid chain; its full sequence is MKIKPILELIPEVKRPLKGVSFKEKIQWTGLVLILYFILGTIDIYMGGAEMPAMFAFWQTVTASKMGTLITLGIGPIVTAGIIMQLLVGSELISLDLSKPMNRALFQGLQKLFGIFLCFLEAVMFVGAGAFGVVNSTLALILVLQLALGAILVIYLDEIVSRYGIGSGIGLFIAAGVAQTIFVGAFGAEGYLWKFFSAMSVGSLGIAFEYILPILSTLFVFLVVVYVESIRVEIPLAHGRVKGAVGKYPIKFIYVSNLPVILAAALFANIQLWGMFLDRMGYPILGQYSNGTAVSGIAYYFSTPYGISNIISDPLHAIFYTLMMVIFCILFGLFWVETSGLDAKSMAKKLGNLDMAIKGFRKSQKSIEQRLKRYIKPITVMGSAFVGFLAAAADFTGALGGGTGVLLTVSIVYRLYEQLVQEQLSELHPAVAKFVGKR.

The helical transmembrane segment at 1-43 (MKIKPILELIPEVKRPLKGVSFKEKIQWTGLVLILYFILGTID) threads the bilayer. Residues 44–54 (IYMGGAEMPAM) are Extracellular-facing. An intramembrane region (helical) is located at residues 55–62 (FAFWQTVT). A discontinuously helical transmembrane segment spans residues 55 to 83 (FAFWQTVTASKMGTLITLGIGPIVTAGII). The stretch at 63–74 (ASKMGTLITLGI) is an intramembrane region. An intramembrane region (helical) is located at residues 75–83 (GPIVTAGII). Residues 84 to 104 (MQLLVGSELISLDLSKPMNRA) are Cytoplasmic-facing. A helical transmembrane segment spans residues 105-129 (LFQGLQKLFGIFLCFLEAVMFVGAG). Topologically, residues 130 to 136 (AFGVVNS) are extracellular. Residues 137–161 (TLALILVLQLALGAILVIYLDEIVS) form a helical membrane-spanning segment. Topologically, residues 162–167 (RYGIGS) are cytoplasmic. The chain crosses the membrane as a helical span at residues 168 to 186 (GIGLFIAAGVAQTIFVGAF). Over 187-209 (GAEGYLWKFFSAMSVGSLGIAFE) the chain is Extracellular. The chain crosses the membrane as a helical span at residues 210 to 231 (YILPILSTLFVFLVVVYVESIR). Residues 232-256 (VEIPLAHGRVKGAVGKYPIKFIYVS) are Cytoplasmic-facing. Residues 257-278 (NLPVILAAALFANIQLWGMFLD) form a helical membrane-spanning segment. Topologically, residues 279–315 (RMGYPILGQYSNGTAVSGIAYYFSTPYGISNIISDPL) are extracellular. Residues 316-335 (HAIFYTLMMVIFCILFGLFW) form a helical membrane-spanning segment. Residues 336–378 (VETSGLDAKSMAKKLGNLDMAIKGFRKSQKSIEQRLKRYIKPI) lie on the Cytoplasmic side of the membrane. The chain crosses the membrane as a helical span at residues 379 to 397 (TVMGSAFVGFLAAAADFTG). Over 398-400 (ALG) the chain is Extracellular. Residues 401–415 (GGTGVLLTVSIVYRL) form a helical membrane-spanning segment. The Cytoplasmic segment spans residues 416 to 438 (YEQLVQEQLSELHPAVAKFVGKR).

The protein belongs to the SecY/SEC61-alpha family. In terms of assembly, component of the Sec protein translocase complex. Heterotrimer consisting of alpha (SecY), beta (SecG) and gamma (SecE) subunits. The heterotrimers can form oligomers, although 1 heterotrimer is thought to be able to translocate proteins. Interacts with the ribosome. May interact with SecDF, and other proteins may be involved.

It localises to the cell membrane. In terms of biological role, the central subunit of the protein translocation channel SecYEG. Consists of two halves formed by TMs 1-5 and 6-10. These two domains form a lateral gate at the front which open onto the bilayer between TMs 2 and 7, and are clamped together by SecE at the back. The channel is closed by both a pore ring composed of hydrophobic SecY resides and a short helix (helix 2A) on the extracellular side of the membrane which forms a plug. The plug probably moves laterally to allow the channel to open. The ring and the pore may move independently. This is Protein translocase subunit SecY from Methanococcus vannielii.